The primary structure comprises 148 residues: Cytochrome c-type biogenesis protein CcmE (148 aa).

Over 1-7 (MKARNKR) the chain is Cytoplasmic. A helical; Signal-anchor for type II membrane protein membrane pass occupies residues 8–28 (LMLVGGGIALLVAAAALVLSA). At 29-148 (FQQNLVFFHT…AHKTATTVQQ (120 aa)) the chain is on the periplasmic side. Heme-binding residues include His-123 and Tyr-127.

This sequence belongs to the CcmE/CycJ family.

It localises to the cell inner membrane. Its function is as follows. Heme chaperone required for the biogenesis of c-type cytochromes. Transiently binds heme delivered by CcmC and transfers the heme to apo-cytochromes in a process facilitated by CcmF and CcmH. In Azoarcus sp. (strain BH72), this protein is Cytochrome c-type biogenesis protein CcmE.